Consider the following 148-residue polypeptide: Large ribosomal subunit protein bL9 (148 aa).

This sequence belongs to the bacterial ribosomal protein bL9 family.

Binds to the 23S rRNA. In Listeria welshimeri serovar 6b (strain ATCC 35897 / DSM 20650 / CCUG 15529 / CIP 8149 / NCTC 11857 / SLCC 5334 / V8), this protein is Large ribosomal subunit protein bL9.